Here is a 313-residue protein sequence, read N- to C-terminus: 4-hydroxy-3-methylbut-2-enyl diphosphate reductase (313 aa).

Cys12 serves as a coordination point for [4Fe-4S] cluster. 2 residues coordinate (2E)-4-hydroxy-3-methylbut-2-enyl diphosphate: His41 and His74. Residues His41 and His74 each contribute to the dimethylallyl diphosphate site. Isopentenyl diphosphate-binding residues include His41 and His74. Cys96 serves as a coordination point for [4Fe-4S] cluster. Residue His124 coordinates (2E)-4-hydroxy-3-methylbut-2-enyl diphosphate. Residue His124 participates in dimethylallyl diphosphate binding. Residue His124 participates in isopentenyl diphosphate binding. Glu126 functions as the Proton donor in the catalytic mechanism. Thr167 contacts (2E)-4-hydroxy-3-methylbut-2-enyl diphosphate. Cys197 provides a ligand contact to [4Fe-4S] cluster. (2E)-4-hydroxy-3-methylbut-2-enyl diphosphate contacts are provided by Ser225, Ser226, Asn227, and Ser269. Dimethylallyl diphosphate contacts are provided by Ser225, Ser226, Asn227, and Ser269. Residues Ser225, Ser226, Asn227, and Ser269 each coordinate isopentenyl diphosphate.

Belongs to the IspH family. Requires [4Fe-4S] cluster as cofactor.

It catalyses the reaction isopentenyl diphosphate + 2 oxidized [2Fe-2S]-[ferredoxin] + H2O = (2E)-4-hydroxy-3-methylbut-2-enyl diphosphate + 2 reduced [2Fe-2S]-[ferredoxin] + 2 H(+). It carries out the reaction dimethylallyl diphosphate + 2 oxidized [2Fe-2S]-[ferredoxin] + H2O = (2E)-4-hydroxy-3-methylbut-2-enyl diphosphate + 2 reduced [2Fe-2S]-[ferredoxin] + 2 H(+). It participates in isoprenoid biosynthesis; dimethylallyl diphosphate biosynthesis; dimethylallyl diphosphate from (2E)-4-hydroxy-3-methylbutenyl diphosphate: step 1/1. The protein operates within isoprenoid biosynthesis; isopentenyl diphosphate biosynthesis via DXP pathway; isopentenyl diphosphate from 1-deoxy-D-xylulose 5-phosphate: step 6/6. Functionally, catalyzes the conversion of 1-hydroxy-2-methyl-2-(E)-butenyl 4-diphosphate (HMBPP) into a mixture of isopentenyl diphosphate (IPP) and dimethylallyl diphosphate (DMAPP). Acts in the terminal step of the DOXP/MEP pathway for isoprenoid precursor biosynthesis. The polypeptide is 4-hydroxy-3-methylbut-2-enyl diphosphate reductase (Photobacterium profundum (strain SS9)).